We begin with the raw amino-acid sequence, 75 residues long: Large ribosomal subunit protein bL31 (75 aa).

This sequence belongs to the bacterial ribosomal protein bL31 family. Type A subfamily. Part of the 50S ribosomal subunit.

Binds the 23S rRNA. In Sphingopyxis alaskensis (strain DSM 13593 / LMG 18877 / RB2256) (Sphingomonas alaskensis), this protein is Large ribosomal subunit protein bL31.